Here is a 423-residue protein sequence, read N- to C-terminus: Glucose-1-phosphate adenylyltransferase (423 aa).

Alpha-D-glucose 1-phosphate contacts are provided by residues Tyr-108, Gly-173, Glu-188 to Lys-189, and Ser-207.

This sequence belongs to the bacterial/plant glucose-1-phosphate adenylyltransferase family. In terms of assembly, homotetramer.

The catalysed reaction is alpha-D-glucose 1-phosphate + ATP + H(+) = ADP-alpha-D-glucose + diphosphate. It functions in the pathway glycan biosynthesis; glycogen biosynthesis. Its function is as follows. Involved in the biosynthesis of ADP-glucose, a building block required for the elongation reactions to produce glycogen. Catalyzes the reaction between ATP and alpha-D-glucose 1-phosphate (G1P) to produce pyrophosphate and ADP-Glc. This is Glucose-1-phosphate adenylyltransferase from Francisella tularensis subsp. holarctica (strain FTNF002-00 / FTA).